The following is a 228-amino-acid chain: Aldehyde dehydrogenase 9 (228 aa).

76–81 (GSTETA) serves as a coordination point for NAD(+). Catalysis depends on residues glutamate 99 and cysteine 132.

This sequence belongs to the aldehyde dehydrogenase family.

It carries out the reaction an aldehyde + NAD(+) + H2O = a carboxylate + NADH + 2 H(+). Its pathway is alcohol metabolism; ethanol degradation; acetate from ethanol: step 2/2. This Polyandrocarpa misakiensis (Tunicate) protein is Aldehyde dehydrogenase 9 (ALDH9).